Consider the following 474-residue polypeptide: ATP synthase subunit beta (474 aa).

An ATP-binding site is contributed by 153-160 (GGAGVGKT).

It belongs to the ATPase alpha/beta chains family. As to quaternary structure, F-type ATPases have 2 components, CF(1) - the catalytic core - and CF(0) - the membrane proton channel. CF(1) has five subunits: alpha(3), beta(3), gamma(1), delta(1), epsilon(1). CF(0) has three main subunits: a(1), b(2) and c(9-12). The alpha and beta chains form an alternating ring which encloses part of the gamma chain. CF(1) is attached to CF(0) by a central stalk formed by the gamma and epsilon chains, while a peripheral stalk is formed by the delta and b chains.

The protein resides in the cell inner membrane. It carries out the reaction ATP + H2O + 4 H(+)(in) = ADP + phosphate + 5 H(+)(out). Produces ATP from ADP in the presence of a proton gradient across the membrane. The catalytic sites are hosted primarily by the beta subunits. The polypeptide is ATP synthase subunit beta (Neorickettsia sennetsu (strain ATCC VR-367 / Miyayama) (Ehrlichia sennetsu)).